Reading from the N-terminus, the 309-residue chain is Ankyrin repeat and SOCS box protein 12 (309 aa).

ANK repeat units follow at residues 63 to 92 (VPGT…DVDS), 96 to 125 (KAQT…SPGG), 129 to 158 (NNCS…EANV), 171 to 200 (SCSG…DPDY), and 213 to 243 (RPRT…NIYL). The SOCS box domain occupies 268–308 (PRSLLSQVRLVVRRALCQAGQPQAINQLDIPPMLISYLKHQ).

This sequence belongs to the ankyrin SOCS box (ASB) family. In terms of assembly, interacts with CUL5 and RNF7.

It participates in protein modification; protein ubiquitination. Probable substrate-recognition component of a SCF-like ECS (Elongin-Cullin-SOCS-box protein) E3 ubiquitin-protein ligase complex which mediates the ubiquitination and subsequent proteasomal degradation of target proteins. In Homo sapiens (Human), this protein is Ankyrin repeat and SOCS box protein 12 (ASB12).